Here is a 600-residue protein sequence, read N- to C-terminus: Ligand-dependent nuclear receptor corepressor-like protein (600 aa).

3 disordered regions span residues 1–24 (MEKG…QCRS), 102–122 (SVIG…GQSN), and 495–519 (DGTS…KRGR). Polar residues predominate over residues 104-122 (IGSSQSTPTEELSSQGQSN). The HTH psq-type domain occupies 514–566 (RKKRGRYRQYDHEIMEEAIAMVMSGKMSVSKAQGIYGVPHSTLEYKVKERSGT). A DNA-binding region (H-T-H motif) is located at residues 542 to 562 (VSKAQGIYGVPHSTLEYKVKE). A disordered region spans residues 581–600 (GLFNMTDSGTGSCKTSSKPV). Residues 583-600 (FNMTDSGTGSCKTSSKPV) are compositionally biased toward polar residues.

Its subcellular location is the nucleus. Functionally, may act as transcription activator that binds DNA elements with the sequence 5'-CCCTATCGATCGATCTCTACCT-3'. The sequence is that of Ligand-dependent nuclear receptor corepressor-like protein (LCORL) from Gallus gallus (Chicken).